A 349-amino-acid polypeptide reads, in one-letter code: Phenylalanine--tRNA ligase alpha subunit (349 aa).

A Mg(2+)-binding site is contributed by glutamate 258.

The protein belongs to the class-II aminoacyl-tRNA synthetase family. Phe-tRNA synthetase alpha subunit type 1 subfamily. In terms of assembly, tetramer of two alpha and two beta subunits. The cofactor is Mg(2+).

The protein resides in the cytoplasm. It catalyses the reaction tRNA(Phe) + L-phenylalanine + ATP = L-phenylalanyl-tRNA(Phe) + AMP + diphosphate + H(+). The polypeptide is Phenylalanine--tRNA ligase alpha subunit (Rickettsia bellii (strain RML369-C)).